Here is a 769-residue protein sequence, read N- to C-terminus: Phosphatidylinositol 4-phosphate 5-kinase 8 (769 aa).

MORN repeat units lie at residues 16–38 (YSGQ…DGII), 39–61 (YEGD…SGAK), 62–84 (YEGD…DGSV), 85–107 (YAGA…NSDV), 108–130 (YDGS…NGNR), 131–153 (FIGN…NGDL), 154–176 (FNGF…DGGF), and 177–198 (YFGT…AGSK). A disordered region spans residues 266–289 (PPRDFMHHGPSSKSARSVDSGQSE). The span at 276–288 (SSKSARSVDSGQS) shows a compositional bias: polar residues. The region spanning 344-765 (WNHYLMLNLQ…RFIDFLLKVF (422 aa)) is the PIPK domain. The segment at 725-746 (YNMKKKVEHTCKSMKYDPMTIS) is activation loop.

It catalyses the reaction a 1,2-diacyl-sn-glycero-3-phospho-(1D-myo-inositol 4-phosphate) + ATP = a 1,2-diacyl-sn-glycero-3-phospho-(1D-myo-inositol-4,5-bisphosphate) + ADP + H(+). This chain is Phosphatidylinositol 4-phosphate 5-kinase 8 (PIP5K8), found in Arabidopsis thaliana (Mouse-ear cress).